The sequence spans 594 residues: NADH-quinone oxidoreductase subunit C/D (594 aa).

Residues 1 to 185 (MTTGSALYIP…DPFSLNLAKQ (185 aa)) are NADH dehydrogenase I subunit C. The segment at 209 to 594 (DYMFLNLGPN…IDFVMADVDR (386 aa)) is NADH dehydrogenase I subunit D.

It in the N-terminal section; belongs to the complex I 30 kDa subunit family. The protein in the C-terminal section; belongs to the complex I 49 kDa subunit family. As to quaternary structure, NDH-1 is composed of 13 different subunits. Subunits NuoB, CD, E, F, and G constitute the peripheral sector of the complex.

It localises to the cell inner membrane. It catalyses the reaction a quinone + NADH + 5 H(+)(in) = a quinol + NAD(+) + 4 H(+)(out). NDH-1 shuttles electrons from NADH, via FMN and iron-sulfur (Fe-S) centers, to quinones in the respiratory chain. The immediate electron acceptor for the enzyme in this species is believed to be ubiquinone. Couples the redox reaction to proton translocation (for every two electrons transferred, four hydrogen ions are translocated across the cytoplasmic membrane), and thus conserves the redox energy in a proton gradient. In Pseudomonas fluorescens (strain Pf0-1), this protein is NADH-quinone oxidoreductase subunit C/D.